The sequence spans 299 residues: Ankyrin repeat domain-containing protein 54 (299 aa).

Positions 1 to 27 (MAATGGGADDESRSGRSSSDGECAVAP) are disordered. The residue at position 2 (alanine 2) is an N-acetylalanine. Serine 62 carries the phosphoserine modification. The Nuclear localization signal (NLS) motif lies at 98-116 (RRLGPTGKEVHALKRLRDS). ANK repeat units lie at residues 108–137 (HALK…DPCA), 141–170 (KGRT…DPNQ), 174–203 (LGNT…RVDA), and 207–239 (AGRT…EVKQ). Residues 140–240 (DKGRTALHFA…EAVRLEVKQI (101 aa)) form an LYN-binding region. The Nuclear export signal (NES) motif lies at 282–292 (LLASFTSLSLQ).

In terms of assembly, interacts (via ankyrin repeat region) with LYN (via SH3-domain) in an activation-independent status of LYN. Forms a multiprotein complex with LYN and HCLS1. Interacts with TSN2, VAV1, DBNL and LASP1. In terms of tissue distribution, expressed in a variety of hemopoietic cell lines and tissue with high levels in testis. Highly expressed in ciliated cells.

It is found in the nucleus. The protein localises to the cytoplasm. It localises to the midbody. In terms of biological role, plays an important role in regulating intracellular signaling events associated with erythroid terminal differentiation. The chain is Ankyrin repeat domain-containing protein 54 (Ankrd54) from Mus musculus (Mouse).